The primary structure comprises 176 residues: Tubulin polymerization-promoting protein family member 3 (176 aa).

Residue Ala2 is modified to N-acetylalanine.

The protein belongs to the TPPP family.

The protein localises to the cytoplasm. Its subcellular location is the cytoskeleton. Functionally, regulator of microtubule dynamic that has microtubule bundling activity. Required for embryo implantation; possibly by regulating beta-catenin. Also required for decidualization via regulation of beta-catenin. This is Tubulin polymerization-promoting protein family member 3 (TPPP3) from Bos taurus (Bovine).